A 304-amino-acid chain; its full sequence is MALCALASALRSLSLASPAITARVPTLLPVGQSNVLLQLPSALALPAHRPVHMSADRSAKFVSWKSRIKYTVKPVKMRKSGGRDHTGRIRVHGIGGGHKQNYRMIDFLRFRPEKGTEPEPFEEKVVVVRYDPCRSADIALVAGGSRKRWIIATENMKAGDTILNSNHIGRMAVAAQEGDAHPLGALPVGTLINNVESEPGRGAQYIRAAGTCGVLLRKVNGTAIIQLPSKRQMQVLESCTATVGRVSNVNHNQRVIGKAGRNRWLGKRPNSGLWQRKGGWAGRKIRPLPPMKSYVKLPSAAAQS.

The N-terminal 60 residues, 1-60 (MALCALASALRSLSLASPAITARVPTLLPVGQSNVLLQLPSALALPAHRPVHMSADRSAK), are a transit peptide targeting the mitochondrion.

The protein belongs to the universal ribosomal protein uL2 family. Component of the mitochondrial ribosome large subunit (39S) which comprises a 16S rRNA and about 50 distinct proteins.

It is found in the mitochondrion. This chain is Large ribosomal subunit protein uL2m (Mrpl2), found in Rattus norvegicus (Rat).